We begin with the raw amino-acid sequence, 365 residues long: Isopentenyl-diphosphate delta-isomerase (365 aa).

8–9 (RK) contributes to the substrate binding site. FMN contacts are provided by residues 67–69 (SIT), Ser97, and Asn126. 97–99 (SQR) lines the substrate pocket. Substrate is bound at residue Gln160. Glu161 is a binding site for Mg(2+). FMN-binding positions include Lys192, Thr222, 272 to 274 (GVR), and 293 to 294 (AL).

This sequence belongs to the IPP isomerase type 2 family. In terms of assembly, homooctamer. Dimer of tetramers. It depends on FMN as a cofactor. NADPH serves as cofactor. The cofactor is Mg(2+).

It is found in the cytoplasm. The enzyme catalyses isopentenyl diphosphate = dimethylallyl diphosphate. Its function is as follows. Involved in the biosynthesis of isoprenoids. Catalyzes the 1,3-allylic rearrangement of the homoallylic substrate isopentenyl (IPP) to its allylic isomer, dimethylallyl diphosphate (DMAPP). The protein is Isopentenyl-diphosphate delta-isomerase of Methanosarcina acetivorans (strain ATCC 35395 / DSM 2834 / JCM 12185 / C2A).